We begin with the raw amino-acid sequence, 61 residues long: [Val1,Thr6]-bradykinyl-Val,Asp (61 aa).

A signal peptide spans 1-22 (MAFLKKSLFLVLFLGVVSLSFC). Positions 23–48 (EEEEREEHEEEKREAEAAESAENLIS) are excised as a propeptide. Residues 27 to 61 (REEHEEEKREAEAAESAENLISKRVPPGFTPFRVD) are disordered.

In terms of tissue distribution, expressed by the skin glands. Expression levels in inguinal glands and granular glands are virtually the same.

It is found in the secreted. Induces contraction of rat ileum smooth muscle (EC(50)=2.73 uM) but has no activity towards rat smooth muscle from tail artery, urinary bladder or uterus. Binds to both bradykinin receptor B1 (BDKRB1) and B2 (BDKRB2); the effect via BDKRB1 is stronger. This is [Val1,Thr6]-bradykinyl-Val,Asp from Physalaemus nattereri (Cuyaba dwarf frog).